Here is a 451-residue protein sequence, read N- to C-terminus: Exodeoxyribonuclease 7 large subunit (451 aa).

Belongs to the XseA family. In terms of assembly, heterooligomer composed of large and small subunits.

Its subcellular location is the cytoplasm. It carries out the reaction Exonucleolytic cleavage in either 5'- to 3'- or 3'- to 5'-direction to yield nucleoside 5'-phosphates.. In terms of biological role, bidirectionally degrades single-stranded DNA into large acid-insoluble oligonucleotides, which are then degraded further into small acid-soluble oligonucleotides. This is Exodeoxyribonuclease 7 large subunit from Neisseria meningitidis serogroup B (strain ATCC BAA-335 / MC58).